A 482-amino-acid chain; its full sequence is tRNA sulfurtransferase (482 aa).

The THUMP domain maps to 61-165 (LAIRDALTRI…DDRLLLIKGR (105 aa)). Residues 183–184 (LI), K265, G287, and Q296 each bind ATP. A disulfide bridge connects residues C344 and C456. A Rhodanese domain is found at 404–482 (FGPNDVILDI…GFNNVKVYRL (79 aa)). Catalysis depends on C456, which acts as the Cysteine persulfide intermediate.

The protein belongs to the ThiI family.

Its subcellular location is the cytoplasm. The catalysed reaction is [ThiI sulfur-carrier protein]-S-sulfanyl-L-cysteine + a uridine in tRNA + 2 reduced [2Fe-2S]-[ferredoxin] + ATP + H(+) = [ThiI sulfur-carrier protein]-L-cysteine + a 4-thiouridine in tRNA + 2 oxidized [2Fe-2S]-[ferredoxin] + AMP + diphosphate. The enzyme catalyses [ThiS sulfur-carrier protein]-C-terminal Gly-Gly-AMP + S-sulfanyl-L-cysteinyl-[cysteine desulfurase] + AH2 = [ThiS sulfur-carrier protein]-C-terminal-Gly-aminoethanethioate + L-cysteinyl-[cysteine desulfurase] + A + AMP + 2 H(+). It functions in the pathway cofactor biosynthesis; thiamine diphosphate biosynthesis. Functionally, catalyzes the ATP-dependent transfer of a sulfur to tRNA to produce 4-thiouridine in position 8 of tRNAs, which functions as a near-UV photosensor. Also catalyzes the transfer of sulfur to the sulfur carrier protein ThiS, forming ThiS-thiocarboxylate. This is a step in the synthesis of thiazole, in the thiamine biosynthesis pathway. The sulfur is donated as persulfide by IscS. This Shigella boydii serotype 18 (strain CDC 3083-94 / BS512) protein is tRNA sulfurtransferase.